The sequence spans 251 residues: 1-(5-phosphoribosyl)-5-[(5-phosphoribosylamino)methylideneamino] imidazole-4-carboxamide isomerase (251 aa).

Asp-7 serves as the catalytic Proton acceptor. Asp-131 serves as the catalytic Proton donor.

This sequence belongs to the HisA/HisF family.

The protein localises to the cytoplasm. It carries out the reaction 1-(5-phospho-beta-D-ribosyl)-5-[(5-phospho-beta-D-ribosylamino)methylideneamino]imidazole-4-carboxamide = 5-[(5-phospho-1-deoxy-D-ribulos-1-ylimino)methylamino]-1-(5-phospho-beta-D-ribosyl)imidazole-4-carboxamide. It participates in amino-acid biosynthesis; L-histidine biosynthesis; L-histidine from 5-phospho-alpha-D-ribose 1-diphosphate: step 4/9. The protein is 1-(5-phosphoribosyl)-5-[(5-phosphoribosylamino)methylideneamino] imidazole-4-carboxamide isomerase of Blochmanniella floridana.